A 403-amino-acid chain; its full sequence is S-adenosylmethionine synthase (403 aa).

H17 provides a ligand contact to ATP. D19 contacts Mg(2+). E45 provides a ligand contact to K(+). E58 and Q104 together coordinate L-methionine. The flexible loop stretch occupies residues 104–114 (QSPDIAQGVDT). ATP-binding positions include 179 to 181 (DGK), 250 to 251 (KF), D259, 265 to 266 (RK), A282, and K286. D259 contributes to the L-methionine binding site. K290 is an L-methionine binding site.

This sequence belongs to the AdoMet synthase family. As to quaternary structure, homotetramer; dimer of dimers. Mg(2+) is required as a cofactor. Requires K(+) as cofactor.

It is found in the cytoplasm. It catalyses the reaction L-methionine + ATP + H2O = S-adenosyl-L-methionine + phosphate + diphosphate. The protein operates within amino-acid biosynthesis; S-adenosyl-L-methionine biosynthesis; S-adenosyl-L-methionine from L-methionine: step 1/1. Functionally, catalyzes the formation of S-adenosylmethionine (AdoMet) from methionine and ATP. The overall synthetic reaction is composed of two sequential steps, AdoMet formation and the subsequent tripolyphosphate hydrolysis which occurs prior to release of AdoMet from the enzyme. This Mycobacterium avium (strain 104) protein is S-adenosylmethionine synthase.